We begin with the raw amino-acid sequence, 380 residues long: Cytochrome b (380 aa).

4 consecutive transmembrane segments (helical) span residues 33–53, 77–98, 113–133, and 178–198; these read FGSLLGACLILQITTGLFLAM, WTIRYLHANGASMFFICLFLHI, WNIGIILLLTTMAAAFMGYVL, and FFTFHFILPFIITALTTLHLL. Heme b-binding residues include His-83 and His-97. Residues His-182 and His-196 each coordinate heme b. Residue His-201 coordinates a ubiquinone. 4 helical membrane passes run 226-246, 288-308, 320-340, and 347-367; these read IKDILGLFLFLLTLMTLTLFS, LGGVLALLLSILILAMIPILH, LSQLLYWFLIADLFTLTWIGG, and FITIGQVASVLYFTTILFLMP.

It belongs to the cytochrome b family. In terms of assembly, the cytochrome bc1 complex contains 11 subunits: 3 respiratory subunits (MT-CYB, CYC1 and UQCRFS1), 2 core proteins (UQCRC1 and UQCRC2) and 6 low-molecular weight proteins (UQCRH/QCR6, UQCRB/QCR7, UQCRQ/QCR8, UQCR10/QCR9, UQCR11/QCR10 and a cleavage product of UQCRFS1). This cytochrome bc1 complex then forms a dimer. Requires heme b as cofactor.

Its subcellular location is the mitochondrion inner membrane. Functionally, component of the ubiquinol-cytochrome c reductase complex (complex III or cytochrome b-c1 complex) that is part of the mitochondrial respiratory chain. The b-c1 complex mediates electron transfer from ubiquinol to cytochrome c. Contributes to the generation of a proton gradient across the mitochondrial membrane that is then used for ATP synthesis. The polypeptide is Cytochrome b (MT-CYB) (Gorilla gorilla gorilla (Western lowland gorilla)).